The primary structure comprises 477 residues: 3-isopropylmalate dehydratase large subunit (477 aa).

[4Fe-4S] cluster is bound by residues cysteine 352, cysteine 413, and cysteine 416.

Belongs to the aconitase/IPM isomerase family. LeuC type 1 subfamily. Heterodimer of LeuC and LeuD. [4Fe-4S] cluster is required as a cofactor.

It carries out the reaction (2R,3S)-3-isopropylmalate = (2S)-2-isopropylmalate. It participates in amino-acid biosynthesis; L-leucine biosynthesis; L-leucine from 3-methyl-2-oxobutanoate: step 2/4. Its function is as follows. Catalyzes the isomerization between 2-isopropylmalate and 3-isopropylmalate, via the formation of 2-isopropylmaleate. The polypeptide is 3-isopropylmalate dehydratase large subunit (Pseudomonas putida (strain ATCC 47054 / DSM 6125 / CFBP 8728 / NCIMB 11950 / KT2440)).